Consider the following 277-residue polypeptide: uncharacterized protein (277 aa).

The SWIM-type zinc-finger motif lies at 139–167 (TARELSLDCSCPDYAVPCKHLAATFYLLA).

This is an uncharacterized protein from Mycobacterium tuberculosis (strain ATCC 25618 / H37Rv).